The sequence spans 380 residues: Cytochrome b (380 aa).

4 consecutive transmembrane segments (helical) span residues 34-54, 78-99, 114-134, and 179-199; these read FGSL…LLAM, WLIR…YFHI, WNTG…GYVL, and FFAL…IHLT. Positions 84 and 98 each coordinate heme b. His-183 and His-197 together coordinate heme b. His-202 lines the a ubiquinone pocket. 4 helical membrane passes run 227-247, 289-309, 321-341, and 348-368; these read LKDI…ALFS, LGGV…PFLH, ISQL…WVGS, and FIII…VLFP.

This sequence belongs to the cytochrome b family. In terms of assembly, the cytochrome bc1 complex contains 11 subunits: 3 respiratory subunits (MT-CYB, CYC1 and UQCRFS1), 2 core proteins (UQCRC1 and UQCRC2) and 6 low-molecular weight proteins (UQCRH/QCR6, UQCRB/QCR7, UQCRQ/QCR8, UQCR10/QCR9, UQCR11/QCR10 and a cleavage product of UQCRFS1). This cytochrome bc1 complex then forms a dimer. It depends on heme b as a cofactor.

Its subcellular location is the mitochondrion inner membrane. Component of the ubiquinol-cytochrome c reductase complex (complex III or cytochrome b-c1 complex) that is part of the mitochondrial respiratory chain. The b-c1 complex mediates electron transfer from ubiquinol to cytochrome c. Contributes to the generation of a proton gradient across the mitochondrial membrane that is then used for ATP synthesis. In Pachyptila salvini (Salvin's prion), this protein is Cytochrome b (MT-CYB).